The primary structure comprises 385 residues: MKDSFLFTSESVTEGHPDKMADQISDAVLDYIIERDQKAKVACETLVANGFCMITGELKTSVYAPMQEIAREVVKKIGYTDALYGFDYRSAAVLNGVGEQSPDINQGVDREDGEIGAGDQGLMFGYACKETETLMPLPIHLAHQLTFALAQKRKDNTLPFLRPDGKSQVSVRYENNKPVSIDTIVISTQHSPEVSQKHLKESVIEEIVYKVLPKEYLHDNIKFFVNPTGKFVIGGPQGDAGLTGRKIIVDTYGGSCPHGGGAFSGKDPSKVDRSAAYAARYVAKNLVASGVCDKATVQLAYAIGVIEPVSVYVNTHNTSKYSSAELEKCVKSVFKLTPKGIIESLDLLRPIYSLTSAYGHFGRELEEFTWEKTNKAEEIQAFFKR.

ATP is bound at residue histidine 16. Aspartate 18 provides a ligand contact to Mg(2+). Glutamate 44 serves as a coordination point for K(+). L-methionine-binding residues include glutamate 57 and glutamine 100. Positions 100–110 (QSPDINQGVDR) are flexible loop. ATP is bound by residues 164–166 (DGK), 230–231 (KF), aspartate 239, 245–246 (RK), alanine 262, and lysine 266. L-methionine is bound at residue aspartate 239. An L-methionine-binding site is contributed by lysine 270.

It belongs to the AdoMet synthase family. As to quaternary structure, homotetramer; dimer of dimers. Mg(2+) serves as cofactor. Requires K(+) as cofactor.

It localises to the cytoplasm. It catalyses the reaction L-methionine + ATP + H2O = S-adenosyl-L-methionine + phosphate + diphosphate. It participates in amino-acid biosynthesis; S-adenosyl-L-methionine biosynthesis; S-adenosyl-L-methionine from L-methionine: step 1/1. Catalyzes the formation of S-adenosylmethionine (AdoMet) from methionine and ATP. The overall synthetic reaction is composed of two sequential steps, AdoMet formation and the subsequent tripolyphosphate hydrolysis which occurs prior to release of AdoMet from the enzyme. The polypeptide is S-adenosylmethionine synthase (Helicobacter pylori (strain Shi470)).